The sequence spans 230 residues: Ribosomal RNA small subunit methyltransferase G (230 aa).

S-adenosyl-L-methionine contacts are provided by residues Gly91, Leu96, 142–143 (VE), and Arg161.

It belongs to the methyltransferase superfamily. RNA methyltransferase RsmG family.

The protein resides in the cytoplasm. It carries out the reaction guanosine(527) in 16S rRNA + S-adenosyl-L-methionine = N(7)-methylguanosine(527) in 16S rRNA + S-adenosyl-L-homocysteine. Its function is as follows. Specifically methylates the N7 position of guanine in position 527 of 16S rRNA. The chain is Ribosomal RNA small subunit methyltransferase G from Burkholderia pseudomallei (strain K96243).